We begin with the raw amino-acid sequence, 276 residues long: Small ribosomal subunit protein uS5w (276 aa).

Residues 1 to 15 (MAERGVERGGDRGDF) are compositionally biased toward basic and acidic residues. Residues 1-42 (MAERGVERGGDRGDFGRGFGGRGGGRGGPRGRGRRAGRAPEE) form a disordered region. The segment covering 16-28 (GRGFGGRGGGRGG) has biased composition (gly residues). An S5 DRBM domain is found at 87-150 (LKDEVMKIMP…ILAKLSVVPI (64 aa)).

The protein belongs to the universal ribosomal protein uS5 family.

This chain is Small ribosomal subunit protein uS5w (RPS2D), found in Arabidopsis thaliana (Mouse-ear cress).